The following is a 79-amino-acid chain: Centromere protein X (79 aa).

An N-acetylmethionine modification is found at Met1.

Belongs to the CENP-X/MHF2 family. In terms of assembly, heterodimer with CENPX, sometimes called MHF; this interaction stabilizes both partners. MHF heterodimers can assemble to form tetrameric structures. MHF also coassemble with CENPT-CENPW heterodimers at centromeres to form the tetrameric CENP-T-W-S-X complex. Forms a discrete complex with FANCM and CENPX, called FANCM-MHF; this interaction, probably mediated by direct binding between CENPS and FANCM, leads to synergistic activation of double-stranded DNA binding and strongly stimulates FANCM-mediated DNA remodeling. Recruited by FANCM to the Fanconi anemia (FA) core complex, which consists of CENPS, CENPX, FANCA, FANCB, FANCC, FANCE, FANCF, FANCG, FANCL, FANCM, FAAP24 and FAAP100. The FA core complex associates with Bloom syndrome (BLM) complex, which consists of at least BLM, DNA topoisomerase 3-alpha (TOP3A), RMI1/BLAP75, RPA1/RPA70 and RPA2/RPA32. The super complex between FA and BLM is called BRAFT.

Its subcellular location is the nucleus. It localises to the chromosome. It is found in the centromere. The protein localises to the kinetochore. DNA-binding component of the Fanconi anemia (FA) core complex. Required for the normal activation of the FA pathway, leading to monoubiquitination of the FANCI-FANCD2 complex in response to DNA damage, cellular resistance to DNA cross-linking drugs, and prevention of chromosomal breakage. In complex with CENPS (MHF heterodimer), crucial cofactor for FANCM in both binding and ATP-dependent remodeling of DNA. Stabilizes FANCM. In complex with CENPS and FANCM (but not other FANC proteins), rapidly recruited to blocked forks and promotes gene conversion at blocked replication forks. In complex with CENPS, CENPT and CENPW (CENP-T-W-S-X heterotetramer), involved in the formation of a functional kinetochore outer plate, which is essential for kinetochore-microtubule attachment and faithful mitotic progression. As a component of MHF and CENP-T-W-S-X complexes, binds DNA and bends it to form a nucleosome-like structure. DNA-binding function is fulfilled in the presence of CENPS, with the following preference for DNA substates: Holliday junction &gt; double-stranded &gt; splay arm &gt; single-stranded. Does not bind DNA on its own. This is Centromere protein X (CENPX) from Bos taurus (Bovine).